The chain runs to 292 residues: Expansin-B11 (292 aa).

The first 27 residues, 1–27 (MAKSCTLVLLLVALVGLSLLVSPIACS), serve as a signal peptide directing secretion. N-linked (GlcNAc...) asparagine glycosylation occurs at N51. One can recognise an Expansin-like EG45 domain in the interval 82-192 (GGACGYQTAV…RRVPCKYSGV (111 aa)). Cystine bridges form between C85–C114, C117–C187, and C122–C128. The 83-residue stretch at 205–287 (FYFEVLIEFE…SWKPGVTYRS (83 aa)) folds into the Expansin-like CBD domain.

This sequence belongs to the expansin family. Expansin B subfamily. Expressed in internodes.

Its subcellular location is the secreted. It localises to the cell wall. The protein localises to the membrane. In terms of biological role, may cause loosening and extension of plant cell walls by disrupting non-covalent bonding between cellulose microfibrils and matrix glucans. No enzymatic activity has been found. May be required for rapid internodal elongation in deepwater rice during submergence. This is Expansin-B11 (EXPB11) from Oryza sativa subsp. japonica (Rice).